The chain runs to 475 residues: Dihydrolipoyl dehydrogenase (475 aa).

FAD-binding positions include 36 to 45 (ERYNTLGGVC), Lys54, and Gly117. The cysteines at positions 45 and 50 are disulfide-linked. NAD(+) is bound by residues 182 to 186 (GGGII), Glu205, Val238, and 270 to 273 (AIGR). Residues Asp313 and Ala321 each contribute to the FAD site. Residue His445 is the Proton acceptor of the active site.

The protein belongs to the class-I pyridine nucleotide-disulfide oxidoreductase family. FAD is required as a cofactor.

The protein resides in the cytoplasm. The enzyme catalyses N(6)-[(R)-dihydrolipoyl]-L-lysyl-[protein] + NAD(+) = N(6)-[(R)-lipoyl]-L-lysyl-[protein] + NADH + H(+). Functionally, the branched-chain alpha-keto dehydrogenase complex catalyzes the overall conversion of alpha-keto acids to acyl-CoA and CO(2). It contains multiple copies of 3 enzymatic components: branched-chain alpha-keto acid decarboxylase (E1), lipoamide acyltransferase (E2) and lipoamide dehydrogenase (E3). In Vibrio cholerae serotype O1 (strain ATCC 39315 / El Tor Inaba N16961), this protein is Dihydrolipoyl dehydrogenase (lpd).